An 86-amino-acid polypeptide reads, in one-letter code: MSVDTQKVIEDNKRSAQDTGSPEVQVALLTARIELLTGHFKTHKKDHHSRRGLLQMVNRRRSLLDYLKKKDNERYKSLIEKLGLRR.

A disordered region spans residues 1-22; that stretch reads MSVDTQKVIEDNKRSAQDTGSP. Positions 7-16 are enriched in basic and acidic residues; the sequence is KVIEDNKRSA.

The protein belongs to the universal ribosomal protein uS15 family. Part of the 30S ribosomal subunit. Forms a bridge to the 50S subunit in the 70S ribosome, contacting the 23S rRNA.

Its function is as follows. One of the primary rRNA binding proteins, it binds directly to 16S rRNA where it helps nucleate assembly of the platform of the 30S subunit by binding and bridging several RNA helices of the 16S rRNA. Functionally, forms an intersubunit bridge (bridge B4) with the 23S rRNA of the 50S subunit in the ribosome. In Xanthomonas axonopodis pv. citri (strain 306), this protein is Small ribosomal subunit protein uS15.